A 1110-amino-acid polypeptide reads, in one-letter code: Serine/threonine-protein kinase PknK (1110 aa).

Residues 26–283 (FDNVEEIGRG…TAADVGEELR (258 aa)) enclose the Protein kinase domain. ATP-binding positions include 32-40 (IGRGGFGVV) and K55. R148 acts as the Proton acceptor in catalysis. Residues N154 and D167 each coordinate Mg(2+). Residues 308 to 343 (RSPEAHAAHRHTGGGTPTVPTPPTPATKYRPSVPTG) form a disordered region.

This sequence belongs to the protein kinase superfamily. Ser/Thr protein kinase family.

It carries out the reaction L-seryl-[protein] + ATP = O-phospho-L-seryl-[protein] + ADP + H(+). It catalyses the reaction L-threonyl-[protein] + ATP = O-phospho-L-threonyl-[protein] + ADP + H(+). The chain is Serine/threonine-protein kinase PknK (pknK) from Mycobacterium bovis (strain ATCC BAA-935 / AF2122/97).